The following is a 205-amino-acid chain: Ypt/Rab-type GTPase avaA (205 aa).

Residues 17–23 (SGVGKTS), 33–40 (FSGSYKAT), Gly66, 125–128 (NKID), and 157–159 (SAK) contribute to the GTP site. Positions 37–45 (YKATIGADF) match the Effector region motif. S-geranylgeranyl cysteine attachment occurs at residues Cys203 and Cys205. Cys205 carries the cysteine methyl ester modification.

Belongs to the small GTPase superfamily. Rab family.

Its activity is regulated as follows. Rab activation is generally mediated by a guanine exchange factor (GEF), while inactivation through hydrolysis of bound GTP is catalyzed by a GTPase activating protein (GAP). Its function is as follows. Ypt/Rab-type GTPases are key regulators of membrane trafficking and intracellular vesicular transport. They act as molecular switches that convert between GTP-bound and GDP-bound states, and regulate virtually all steps of membrane traffic from the formation of the transport vesicle at the donor membrane to its fusion at the target membrane. In the GDP-bound state, Ypt proteins are predominantly cytosolic, solubilized through the interaction with a GDP dissociation inhibitor (GDI). In the GTP-bound state, the proteins are membrane bound and interact with specific effector proteins that select cargo, promote vesicle movement, or verify the correct site of fusion. AvaA functions in vacuolar biogenesis. This Emericella nidulans (strain FGSC A4 / ATCC 38163 / CBS 112.46 / NRRL 194 / M139) (Aspergillus nidulans) protein is Ypt/Rab-type GTPase avaA.